Consider the following 219-residue polypeptide: Ribose-5-phosphate isomerase A (219 aa).

Residues 28-31, 81-84, and 94-97 contribute to the substrate site; these read TGST, DGAD, and KGGG. Residue E103 is the Proton acceptor of the active site. K121 serves as a coordination point for substrate.

Belongs to the ribose 5-phosphate isomerase family. In terms of assembly, homodimer.

The catalysed reaction is aldehydo-D-ribose 5-phosphate = D-ribulose 5-phosphate. The protein operates within carbohydrate degradation; pentose phosphate pathway; D-ribose 5-phosphate from D-ribulose 5-phosphate (non-oxidative stage): step 1/1. Functionally, catalyzes the reversible conversion of ribose-5-phosphate to ribulose 5-phosphate. The sequence is that of Ribose-5-phosphate isomerase A from Shewanella sp. (strain ANA-3).